The primary structure comprises 354 residues: Envelope protein US28 (354 aa).

At 1 to 37 (MTPTTTTAELTTEFDYDEDATPCVFTDVLNQSKPVTL) the chain is on the extracellular side. N-linked (GlcNAc...) asparagine; by host glycosylation occurs at Asn-30. A helical transmembrane segment spans residues 38–58 (FLYGVVFLFGSIGNFLVIFTI). Over 59-69 (TWRRRIQCSGD) the chain is Cytoplasmic. A helical transmembrane segment spans residues 70-90 (VYFINLAAADLLFVCTLPLWM). Over 91-101 (QYLLDHNSLAS) the chain is Extracellular. The helical transmembrane segment at 102-122 (VPCTLLTACFYVAMFASLCFI) threads the bilayer. Residues 123-145 (TEIALDRYYAIVYMRYRPVKQAC) are Cytoplasmic-facing. A helical transmembrane segment spans residues 146–166 (LFSIFWWIFAVIIAIPHFMVV). Over 167 to 183 (TKKDNQCMTDYDYLEVS) the chain is Extracellular. A helical membrane pass occupies residues 184 to 204 (YPIILNVELMLGAFVIPLSVI). Residues 205 to 228 (SYCYYRISRIVAVSQSRHKGRIVR) lie on the Cytoplasmic side of the membrane. The chain crosses the membrane as a helical span at residues 229–249 (VLIAVVLVFIIFWLPYHLTLF). Over 250–273 (VDTLKLLKWISSSCEFERSLKRAL) the chain is Extracellular. The chain crosses the membrane as a helical span at residues 274-294 (ILTESLAFCHCCLNPLLYVFV). At 295–354 (GTKFRQELHCLLAEFRQRLFSRDVSWYHSMSFSRRGSPSRRETSSDTLSDEVCRVSQIIP) the chain is on the cytoplasmic side.

Belongs to the G-protein coupled receptor 1 family. Interacts with host GPRASP1; this interaction targets US28 to lysosomes for degradation. Interacts with host CX3CL1/Fractalkine (via N-terminus). Phosphorylated. High phosphorylation occurs concomitantly with receptor endocytosis and correlate with low receptor presence at the plasma membrane.

It localises to the host cell membrane. In terms of biological role, receptor for a C-C type chemokine. Binds to a great number of different CC-chemokines including CCL5/RANTES, CCL2/MCP-1, CCL3/MIP-1-alpha as well as CX3CL1/Fractalkine. Transduces signals resulting in the activation of MAP kinase signaling pathways and augmentation of intracellular calcium ion levels, leading to alterations in chemotactic behavior of vascular smooth muscle cells and macrophages. The US28 receptor also exhibits high levels of agonist-independent signaling activity and agonist-independent endocytosis. Interacts with the host Gi complex without activating it, thereby probably interfering with the chemokine-Gi signaling. May also function as a G protein sink to sequester G protein from the cell surface via internalization. Interacts with endogenous Gaq/11 subunits and thereby constitutively activates phospholipase C. This chain is Envelope protein US28 (US28), found in Human cytomegalovirus (strain Merlin) (HHV-5).